A 169-amino-acid polypeptide reads, in one-letter code: Inorganic pyrophosphatase (169 aa).

The residue at position 1 (M1) is an N-formylmethionine. Substrate-binding residues include K28, R42, and Y54. Mg(2+) contacts are provided by D64, D69, and D101. Y138 contacts substrate.

This sequence belongs to the PPase family. In terms of assembly, homohexamer. Mg(2+) is required as a cofactor.

Its subcellular location is the cytoplasm. It carries out the reaction diphosphate + H2O = 2 phosphate + H(+). Inhibited by ATP, but not by fructose 1,6-bisphosphate or 2-phosphoglycerate. In terms of biological role, hydrolyzes PPi generated in anabolic reactions. Its function is as follows. Catalyzes the hydrolysis of inorganic pyrophosphate (PPi) forming two phosphate ions. This chain is Inorganic pyrophosphatase, found in Synechocystis sp. (strain ATCC 27184 / PCC 6803 / Kazusa).